We begin with the raw amino-acid sequence, 331 residues long: 6-phosphogluconolactonase (331 aa).

The protein belongs to the cycloisomerase 2 family.

It catalyses the reaction 6-phospho-D-glucono-1,5-lactone + H2O = 6-phospho-D-gluconate + H(+). The protein operates within carbohydrate degradation; pentose phosphate pathway; D-ribulose 5-phosphate from D-glucose 6-phosphate (oxidative stage): step 2/3. Its function is as follows. Catalyzes the hydrolysis of 6-phosphogluconolactone to 6-phosphogluconate. In Salmonella agona (strain SL483), this protein is 6-phosphogluconolactonase.